The sequence spans 343 residues: Olfactory receptor 1E3 (343 aa).

Topologically, residues 1–28 (MMKKNQTMISEFLLLGLPIQPEQQNLFY) are extracellular. An N-linked (GlcNAc...) asparagine glycan is attached at Asn-5. Residues 29–49 (ALFLAVYLTTLLGNLLVIVLI) form a helical membrane-spanning segment. The Cytoplasmic segment spans residues 50–107 (RLDSHLHMPMYLCLSNLSFSDLCFSSVTMPKLLQNMQSQNPSIPFADCLAQMYFHLFY). Cys-97 and Cys-179 are joined by a disulfide. A helical transmembrane segment spans residues 108–128 (GVLESFLLVVMAYHCYVAICF). The Extracellular segment spans residues 129–141 (PLHYTTIMSPKCC). Residues 142 to 162 (LGLLTLSWLLTTAHATLHTLL) form a helical membrane-spanning segment. At 163–195 (MARLSFCAENVIPHFFCDTSTLLKLACSNTQVN) the chain is on the cytoplasmic side. The helical transmembrane segment at 196 to 216 (GWVMFFMGGLILVIPFLLLIM) threads the bilayer. At 217–242 (SCARIVSTILRVPSTGGIQKAFSTCG) the chain is on the extracellular side. Residues 243–263 (PHLSVVSLFYGTIIGLYLCPL) traverse the membrane as a helical segment. Residues 264–271 (TNHNTVKD) lie on the Cytoplasmic side of the membrane. Residues 272-292 (TVMAVMYTGVTHMLNPFIYSL) traverse the membrane as a helical segment. The Extracellular portion of the chain corresponds to 293–310 (RNRDMRGNPGQSLQHKEN). The chain crosses the membrane as a helical span at residues 311 to 331 (FFVFKIVIVGILPLLNLVGVV). Topologically, residues 332-343 (KLIMKYHSKSVA) are cytoplasmic.

It belongs to the G-protein coupled receptor 1 family.

The protein resides in the cell membrane. Its function is as follows. Odorant receptor. The sequence is that of Olfactory receptor 1E3 (OR1E3) from Homo sapiens (Human).